Here is a 418-residue protein sequence, read N- to C-terminus: Mitochondrial outer membrane protein SLC25A46 (418 aa).

The segment at 1-30 (MHPRRPDGFDGLGYRGGARDEQGFGGAFPA) is disordered. Position 32 is a phosphoserine (Ser-32). The segment at 44–93 (TTPPDIPGSRNLHWGEKSPPYGVPTTSTPYEGPTEEPFSSGGGGSVQGQS) is disordered. Thr-45 is subject to Phosphothreonine. Residues 96–187 (QLNRFAGFGI…GIISEFTPLP (92 aa)) form a Solcar 1 repeat. Transmembrane regions (helical) follow at residues 103–123 (FGIG…CIVL), 167–187 (FIVQ…TPLP), 202–222 (HLLL…ASLI), 258–278 (LLPL…HYII), 314–334 (FPEL…LYPL), and 382–402 (VFGF…HAAV). A Solcar 2 repeat occupies 311 to 413 (DAYFPELIAN…QITKIIYSTL (103 aa)).

It belongs to the mitochondrial carrier (TC 2.A.29) family. In terms of assembly, associates with the mitochondrial contact site and cristae organizing system (MICOS) complex. May associate with the endoplasmic reticulum membrane protein complex (EMC).

It is found in the mitochondrion outer membrane. Transmembrane protein of the mitochondrial outer membrane that controls mitochondrial organization. May regulate the assembly of the MICOS (mitochondrial contact site and cristae organizing system) complex which is essential to the biogenesis and dynamics of mitochondrial cristae, the inwards folds of the inner mitochondrial membrane. Through its interaction with the EMC (endoplasmic reticulum membrane protein complex), could regulate mitochondrial lipid homeostasis and thereby mitochondrial fission. In Homo sapiens (Human), this protein is Mitochondrial outer membrane protein SLC25A46.